A 407-amino-acid chain; its full sequence is Eukaryotic initiation factor 4A-II (407 aa).

The segment at 1–23 (MSGGSADYSRDHGGPEGMEPDGV) is disordered. The short motif at 33–61 (DNFDDMNLKESLLRGIYAYGFEKPSAIQQ) is the Q motif element. In terms of domain architecture, Helicase ATP-binding spans 64–235 (IIPCIKGYDV…KKFMREPIRI (172 aa)). 77–84 (AQSGTGKT) serves as a coordination point for ATP. The DEAD box signature appears at 183–186 (DEAD). Residues 246–407 (GIKQFYINVE…EMPMNVADLI (162 aa)) form the Helicase C-terminal domain.

It belongs to the DEAD box helicase family. eIF4A subfamily. EIF4F is a multi-subunit complex, the composition of which varies with external and internal environmental conditions. It is composed of at least EIF4A, EIF4E and EIF4G1/EIFFG3. Interacts with EIF4E.

The catalysed reaction is ATP + H2O = ADP + phosphate + H(+). Functionally, ATP-dependent RNA helicase which is a subunit of the eIF4F complex involved in cap recognition and is required for mRNA binding to ribosome. In the current model of translation initiation, eIF4A unwinds RNA secondary structures in the 5'-UTR of mRNAs which is necessary to allow efficient binding of the small ribosomal subunit, and subsequent scanning for the initiator codon. This is Eukaryotic initiation factor 4A-II (EIF4A2) from Gallus gallus (Chicken).